A 184-amino-acid chain; its full sequence is TRAF-interacting protein with FHA domain-containing protein A (184 aa).

Residue Thr9 is modified to Phosphothreonine; by ALPK1. The 57-residue stretch at 47–103 (VKFGRNSNICHYTFQDKQVSRVQFSLQLFKKFNSSVLSFEIKNMSKKTNLIVDSREL) folds into the FHA domain. The tract at residues 165–184 (TYSLCSSQSSSPTEMDENES) is disordered. The segment covering 167–177 (SLCSSQSSSPT) has biased composition (polar residues).

The protein belongs to the TIFA family. In terms of assembly, homooligomer; homooligomerizes following phosphorylation at Thr-9. Interacts with IRAK1, TRAF2 and TRAF6. Interacts with TIFAB; binding to TIFAB inhibits TRAF6 activation, possibly by inducing a conformational change in TIFA. Interacts with ZCCHC11; binding to ZCCHC11 suppresses the TRAF6-dependent activation of NF-kappa-B. Phosphorylated at Thr-9 following detection of ADP-D-glycero-beta-D-manno-heptose (ADP-Heptose) by ALPK1. Phosphorylation at Thr-9 by ALPK1 leads to the formation of an intermolecular binding between the FHA domain and phosphorylated Thr-9, promoting TIFA oligomerization and TIFA-mediated NF-kappa-B activation.

Its subcellular location is the cytoplasm. In terms of biological role, adapter molecule that plays a key role in the activation of pro-inflammatory NF-kappa-B signaling following detection of bacterial pathogen-associated molecular pattern metabolites (PAMPs). Promotes activation of an innate immune response by inducing the oligomerization and polyubiquitination of TRAF6, which leads to the activation of TAK1 and IKK through a proteasome-independent mechanism. TIFA-dependent innate immune response is triggered by ADP-D-glycero-beta-D-manno-heptose (ADP-Heptose), a potent PAMP present in all Gram-negative and some Gram-positive bacteria: ADP-Heptose is recognized by ALPK1, which phosphorylates TIFA at Thr-9, leading to TIFA homooligomerization and subsequent activation of pro-inflammatory NF-kappa-B signaling. The polypeptide is TRAF-interacting protein with FHA domain-containing protein A (Homo sapiens (Human)).